We begin with the raw amino-acid sequence, 320 residues long: Iminosuccinate reductase (320 aa).

Residue lysine 67 is the Proton donor/acceptor of the active site. Residues arginine 110, 137 to 138, asparagine 159, serine 199, 219 to 222, lysine 226, and glycine 291 each bind NAD(+); these read HQ and MGTD.

Belongs to the ornithine cyclodeaminase/mu-crystallin family. BhcD subfamily.

The catalysed reaction is L-aspartate + NAD(+) = iminosuccinate + NADH + H(+). In terms of biological role, imine reductase that catalyzes the NADH-dependent reduction of iminosuccinate to L-aspartate. Is essential for the growth of P.denitrificans in the presence of glycolate and glyoxylate since it functions in glyoxylate assimilation via the beta-hydroxyaspartate cycle (BHAC). Thereby BhcD regenerates the amino group donor for the first step of the BHAC. This chain is Iminosuccinate reductase, found in Paracoccus denitrificans (strain Pd 1222).